The sequence spans 605 residues: Dihydrogeodin oxidase (605 aa).

Residues 1–18 form the signal peptide; it reads MPSLKDWVVAGLVPMTIA. N-linked (GlcNAc...) asparagine glycans are attached at residues Asn27, Asn107, and Asn112. Plastocyanin-like domains lie at 65 to 183, 189 to 347, and 424 to 567; these read TVTQ…GPSS, DLGP…YDES, and YVDW…KIKP. Residues His117, His119, His161, and His163 each contribute to the Cu cation site. Asn278 and Asn467 each carry an N-linked (GlcNAc...) asparagine glycan. Cu cation contacts are provided by His484, His487, His489, His543, Cys544, His545, and His549.

Belongs to the multicopper oxidase family. Cu cation is required as a cofactor.

It catalyses the reaction 2 dihydrogeodin + O2 + 2 H(+) = 2 (+)-geodin + 2 H2O. It functions in the pathway secondary metabolite biosynthesis. Dihydrogeodin oxidase; part of the gene cluster that mediates the biosynthesis of geodin, an intermediate in the biosynthesis of other natural products. The pathway begins with the synthesis of atrochrysone thioester by the polyketide synthase (PKS) gedC. The atrochrysone carboxyl ACP thioesterase gedB then breaks the thioester bond and releases the atrochrysone carboxylic acid from gedC. The atrochrysone carboxylic acid is then converted to atrochrysone which is further transformed into emodinanthrone. The next step is performed by the emodinanthrone oxygenase gedH that catalyzes the oxidation of emodinanthrone to emodin. Emodin O-methyltransferase encoded probably by gedA then catalyzes methylation of the 8-hydroxy group of emodin to form questin. Ring cleavage of questin by questin oxidase gedK leads to desmethylsulochrin via several intermediates including questin epoxide. Another methylation step probably catalyzed by methyltransferase gedG leads to the formation of sulochrin which is further converted to dihydrogeodin by the sulochrin halogenase gedL. Finally, the dihydrogeodin oxidase gedJ catalyzes the stereospecific phenol oxidative coupling reaction converting dihydrogeodin to geodin. The chain is Dihydrogeodin oxidase from Aspergillus terreus (strain NIH 2624 / FGSC A1156).